The following is a 445-amino-acid chain: Exodeoxyribonuclease 7 large subunit (445 aa).

The protein belongs to the XseA family. As to quaternary structure, heterooligomer composed of large and small subunits.

It is found in the cytoplasm. The enzyme catalyses Exonucleolytic cleavage in either 5'- to 3'- or 3'- to 5'-direction to yield nucleoside 5'-phosphates.. Bidirectionally degrades single-stranded DNA into large acid-insoluble oligonucleotides, which are then degraded further into small acid-soluble oligonucleotides. This Staphylococcus haemolyticus (strain JCSC1435) protein is Exodeoxyribonuclease 7 large subunit.